Reading from the N-terminus, the 325-residue chain is ATPase GET3 (325 aa).

ATP is bound at residue 34–41 (KGGVGKTT). D63 is a catalytic residue. Residues E243 and N270 each contribute to the ATP site. 2 residues coordinate Zn(2+): C281 and C284.

This sequence belongs to the arsA ATPase family. Homodimer.

The protein localises to the cytoplasm. The protein resides in the endoplasmic reticulum. Functionally, ATPase required for the post-translational delivery of tail-anchored (TA) proteins to the endoplasmic reticulum. Recognizes and selectively binds the transmembrane domain of TA proteins in the cytosol. This complex then targets to the endoplasmic reticulum by membrane-bound receptors, where the tail-anchored protein is released for insertion. This process is regulated by ATP binding and hydrolysis. ATP binding drives the homodimer towards the closed dimer state, facilitating recognition of newly synthesized TA membrane proteins. ATP hydrolysis is required for insertion. Subsequently, the homodimer reverts towards the open dimer state, lowering its affinity for the membrane-bound receptor, and returning it to the cytosol to initiate a new round of targeting. In Coccidioides posadasii (strain C735) (Valley fever fungus), this protein is ATPase GET3.